The chain runs to 1031 residues: Beta-galactosidase (1031 aa).

Substrate-binding residues include asparagine 98 and aspartate 197. Residue aspartate 197 coordinates Na(+). Mg(2+) is bound by residues glutamate 412, histidine 414, and glutamate 457. Substrate contacts are provided by residues glutamate 457 and 533–536 (EYAH). Residue glutamate 457 is the Proton donor of the active site. Glutamate 533 (nucleophile) is an active-site residue. Asparagine 593 lines the Mg(2+) pocket. Na(+) contacts are provided by phenylalanine 597 and aspartate 600. The substrate site is built by aspartate 600 and tryptophan 1005.

Belongs to the glycosyl hydrolase 2 family. In terms of assembly, homotetramer. Mg(2+) serves as cofactor. Requires Na(+) as cofactor.

The catalysed reaction is Hydrolysis of terminal non-reducing beta-D-galactose residues in beta-D-galactosides.. This is Beta-galactosidase from Oenococcus oeni (strain ATCC BAA-331 / PSU-1).